A 1404-amino-acid polypeptide reads, in one-letter code: Probable GPI-anchored adhesin-like protein PGA55 (1404 aa).

The signal sequence occupies residues 1–19 (MVLLCKYKVSWVFVLSVAG). Repeat copies occupy residues 104–109 (VSSSSS), 136–141 (VSSSSE), 156–161 (VSSSSK), 162–167 (VSSSSE), 183–188 (VSSSSQ), 196–201 (VSSSSE), 203–208 (VSSSSE), 209–214 (VSSSSE), 216–221 (VSSSSE), 222–227 (VSSSSE), 228–233 (VSSSSE), 234–239 (VSSSSQ), 247–252 (VSSSSE), 253–258 (VSSSSS), 261–266 (VSSSSE), 267–272 (VSSSSE), 274–279 (VSSSSE), 280–285 (VSSSSE), 286–291 (VSSSSE), 292–297 (VSSSSE), 298–303 (VSSSSE), 304–309 (VSSSSQ), 317–322 (VSSSSE), 324–329 (VSSSSE), 330–335 (VSSSSE), 336–341 (VSSSSE), 343–348 (VSSSSE), 349–354 (VSSSSE), 355–360 (VSSSSE), 361–366 (VSSSSQ), 374–379 (VSSSSE), 380–385 (VSSSSS), 388–393 (VSSSSE), 394–399 (VSSSSE), 401–406 (VSSSSE), 407–412 (VSSSSE), 413–418 (VSSSSE), 419–424 (VSSSSE), 425–430 (VSSSSE), 431–436 (VSSSSQ), 444–449 (VSSSSE), 450–455 (VSSSSE), 457–462 (VSSSSE), 463–468 (VSSSSE), 469–474 (VSSSSE), 475–480 (VSSSSQ), 488–493 (VSSSSE), 494–500 (VSSSSSE), 502–507 (VSSSSE), 508–513 (VSSSSE), 515–520 (VSSSSE), 521–526 (VSSSSE), 527–532 (VSSSSE), 533–538 (VSSSSQ), 546–551 (VSSSSE), 552–557 (VSSSSS), 560–565 (VSSSSE), 566–571 (VSSSSE), 573–578 (VSSSSE), 579–584 (VSSSSE), 585–590 (VSSSSE), 591–596 (VSSSSQ), 604–609 (VSSSSE), 611–616 (VSSSSE), 617–622 (VSSSSE), 623–628 (VSSSSE), 629–634 (VSSSSE), 635–640 (VSSSSE), 641–646 (VSSSSQ), 654–659 (VSSSSE), 660–665 (VSSSSS), 668–673 (VSSSSE), 674–679 (VSSSSE), 681–686 (VSSSSE), 687–692 (VSSSSE), 693–698 (VSSSSE), 699–704 (VSSSSQ), 712–717 (VSSSSE), 719–724 (VSSSSE), 725–730 (VSSSSE), 731–736 (VSSSSE), 737–742 (VSSSSE), 743–748 (VSSSSE), 749–754 (VSSSSE), 771–776 (VTSSSE), 777–782 (VSSSSQ), and 797–802 (VSSSSE). The interval 104–541 (VSSSSSEVIS…EVSSSSQVTS (438 aa)) is 88 X 6 AA approximate tandem repeats. The segment at 113-833 (SSSSEEASSS…VSSSSASSEV (721 aa)) is disordered. The N-linked (GlcNAc...) asparagine glycan is linked to asparagine 817. Residues 824-829 (VSSSSA) form a 1-88 repeat. Residues asparagine 994 and asparagine 1074 are each glycosylated (N-linked (GlcNAc...) asparagine). The GPI-anchor amidated asparagine moiety is linked to residue asparagine 1382. A propeptide spans 1383–1404 (AASRQSFNYKFIVGLILAYIIA) (removed in mature form).

It is found in the cell membrane. Functionally, predicted GPI-anchored adhesin-like protein which may be involved in filamentous growth and chlamydospore formation. This Candida albicans (strain SC5314 / ATCC MYA-2876) (Yeast) protein is Probable GPI-anchored adhesin-like protein PGA55 (PGA55).